Consider the following 69-residue polypeptide: Large ribosomal subunit protein uL29 (69 aa).

This sequence belongs to the universal ribosomal protein uL29 family.

The chain is Large ribosomal subunit protein uL29 from Rhodopseudomonas palustris (strain TIE-1).